A 327-amino-acid polypeptide reads, in one-letter code: Phenylalanine--tRNA ligase alpha subunit (327 aa).

E252 serves as a coordination point for Mg(2+).

The protein belongs to the class-II aminoacyl-tRNA synthetase family. Phe-tRNA synthetase alpha subunit type 1 subfamily. Tetramer of two alpha and two beta subunits. Requires Mg(2+) as cofactor.

The protein localises to the cytoplasm. The enzyme catalyses tRNA(Phe) + L-phenylalanine + ATP = L-phenylalanyl-tRNA(Phe) + AMP + diphosphate + H(+). In Photobacterium profundum (strain SS9), this protein is Phenylalanine--tRNA ligase alpha subunit.